Reading from the N-terminus, the 798-residue chain is Ubiquitin carboxyl-terminal hydrolase 10 (798 aa).

Position 2 is an N-acetylalanine (Ala2). An interaction with p53/TP53 region spans residues 2–100 (ALHSPQYIFG…ILGCTASKIT (99 aa)). Residues 6–21 (PQYIFGDFSPDEFNQF) are G3BP1-binding. Thr24 carries the post-translational modification Phosphothreonine. Thr42 bears the Phosphothreonine; by ATM mark. Thr100 is modified (phosphothreonine). 3 disordered regions span residues 139–166 (GVSG…LKDG), 194–257 (AEFM…CFPA), and 307–337 (TESI…LPVS). A compositionally biased stretch (polar residues) spans 205-219 (TPRTCNSPQNSTDSV). Phosphoserine occurs at positions 211 and 226. Residues 307 to 316 (TESIDLDPTK) are compositionally biased toward basic and acidic residues. Ser321 bears the Phosphoserine mark. Positions 328–337 (GSASGTLPVS) are enriched in polar residues. Ser337 is modified (phosphoserine; by ATM). Phosphoserine occurs at positions 365 and 370. A USP domain is found at 415 to 795 (RGLINKGNWC…TAYLLYYRRV (381 aa)). Residue Cys424 is the Nucleophile of the active site. Residue Ser547 is modified to Phosphoserine. Positions 551–562 (EKLTISNGPKNH) are enriched in polar residues. Positions 551-594 (EKLTISNGPKNHSVNEEEQEEQGEGSEDEWEQVGPRNKTSVTRQ) are disordered. Residues Ser563 and Ser576 each carry the phosphoserine modification. The span at 566-581 (EEEQEEQGEGSEDEWE) shows a compositional bias: acidic residues. His749 acts as the Proton acceptor in catalysis.

This sequence belongs to the peptidase C19 family. USP10 subfamily. As to quaternary structure, found in a deubiquitination complex with TANK, USP10 and ZC3H12A; this complex inhibits genotoxic stress- or interleukin-1-beta (IL1B)-mediated NF-kappa-B activation by promoting IKBKG or TRAF6 deubiquitination. Interacts with IKBKG; this interaction increases in response to DNA damage. Interacts with TANK; this interaction increases in response to DNA damage. Interacts with TRAF6; this interaction increases in response to DNA damage. Interacts with ZC3H12A; this interaction increases in response to DNA damage. Interacts with G3BP1 (via NTF2 domain) and G3BP2 (via NTF2 domain); inhibiting stress granule formation. Post-translationally, phosphorylated by ATM following DNA damage, leading to stabilization and translocation it to the nucleus. In terms of processing, ubiquitinated. Deubiquitinated by USP13. In terms of tissue distribution, widely expressed.

It localises to the cytoplasm. It is found in the nucleus. The protein resides in the early endosome. The catalysed reaction is Thiol-dependent hydrolysis of ester, thioester, amide, peptide and isopeptide bonds formed by the C-terminal Gly of ubiquitin (a 76-residue protein attached to proteins as an intracellular targeting signal).. With respect to regulation, specifically inhibited by spautin-1 (specific and potent autophagy inhibitor-1), a derivative of MBCQ that binds to USP10 and inhibits deubiquitinase activity. Regulated by PIK3C3/VPS34-containing complexes. In terms of biological role, hydrolase that can remove conjugated ubiquitin from target proteins such as p53/TP53, RPS2/us5, RPS3/us3, RPS10/eS10, BECN1, SNX3 and CFTR. Acts as an essential regulator of p53/TP53 stability: in unstressed cells, specifically deubiquitinates p53/TP53 in the cytoplasm, leading to counteract MDM2 action and stabilize p53/TP53. Following DNA damage, translocates to the nucleus and deubiquitinates p53/TP53, leading to regulate the p53/TP53-dependent DNA damage response. Component of a regulatory loop that controls autophagy and p53/TP53 levels: mediates deubiquitination of BECN1, a key regulator of autophagy, leading to stabilize the PIK3C3/VPS34-containing complexes. In turn, PIK3C3/VPS34-containing complexes regulate USP10 stability, suggesting the existence of a regulatory system by which PIK3C3/VPS34-containing complexes regulate p53/TP53 protein levels via USP10 and USP13. Does not deubiquitinate MDM2. Plays a key role in 40S ribosome subunit recycling when a ribosome has stalled during translation: acts both by inhibiting formation of stress granules, which store stalled translation pre-initiation complexes, and mediating deubiquitination of 40S ribosome subunits. Acts as a negative regulator of stress granules formation by lowering G3BP1 and G3BP2 valence, thereby preventing G3BP1 and G3BP2 ability to undergo liquid-liquid phase separation (LLPS) and assembly of stress granules. Promotes 40S ribosome subunit recycling following ribosome dissociation in response to ribosome stalling by mediating deubiquitination of 40S ribosomal proteins RPS2/us5, RPS3/us3 and RPS10/eS10, thereby preventing their degradation by the proteasome. Part of a ribosome quality control that takes place when ribosomes have stalled during translation initiation (iRQC): USP10 acts by removing monoubiquitination of RPS2/us5 and RPS3/us3, promoting 40S ribosomal subunit recycling. Deubiquitinates CFTR in early endosomes, enhancing its endocytic recycling. Involved in a TANK-dependent negative feedback response to attenuate NF-kappa-B activation via deubiquitinating IKBKG or TRAF6 in response to interleukin-1-beta (IL1B) stimulation or upon DNA damage. Deubiquitinates TBX21 leading to its stabilization. Plays a negative role in the RLR signaling pathway upon RNA virus infection by blocking the RIGI-mediated MAVS activation. Mechanistically, removes the unanchored 'Lys-63'-linked polyubiquitin chains of MAVS to inhibit its aggregation, essential for its activation. The protein is Ubiquitin carboxyl-terminal hydrolase 10 of Homo sapiens (Human).